We begin with the raw amino-acid sequence, 196 residues long: uncharacterized protein (196 aa).

Residues 1–10 are compositionally biased toward pro residues; sequence MPGMVPPHVP. Disordered stretches follow at residues 1–118 and 176–196; these read MPGM…EGSG and TEQA…SAPG. Residues 25–45 show a composition bias toward low complexity; that stretch reads PVAPQVPSPGGAPGQGPYPYS. A compositionally biased stretch (polar residues) spans 54–69; it reads LDTSGKNLTEQNSYSN.

This is an uncharacterized protein from Homo sapiens (Human).